The sequence spans 124 residues: S-adenosylmethionine decarboxylase proenzyme (124 aa).

Ser-63 serves as the catalytic Schiff-base intermediate with substrate; via pyruvic acid. Ser-63 is subject to Pyruvic acid (Ser); by autocatalysis. The active-site Proton acceptor; for processing activity is His-68. Cys-83 acts as the Proton donor; for catalytic activity in catalysis.

It belongs to the prokaryotic AdoMetDC family. Type 1 subfamily. In terms of assembly, heterotetramer of two alpha and two beta chains arranged as a dimer of alpha/beta heterodimers. Pyruvate serves as cofactor. In terms of processing, is synthesized initially as an inactive proenzyme. Formation of the active enzyme involves a self-maturation process in which the active site pyruvoyl group is generated from an internal serine residue via an autocatalytic post-translational modification. Two non-identical subunits are generated from the proenzyme in this reaction, and the pyruvate is formed at the N-terminus of the alpha chain, which is derived from the carboxyl end of the proenzyme. The post-translation cleavage follows an unusual pathway, termed non-hydrolytic serinolysis, in which the side chain hydroxyl group of the serine supplies its oxygen atom to form the C-terminus of the beta chain, while the remainder of the serine residue undergoes an oxidative deamination to produce ammonia and the pyruvoyl group blocking the N-terminus of the alpha chain.

It carries out the reaction S-adenosyl-L-methionine + H(+) = S-adenosyl 3-(methylsulfanyl)propylamine + CO2. The protein operates within amine and polyamine biosynthesis; S-adenosylmethioninamine biosynthesis; S-adenosylmethioninamine from S-adenosyl-L-methionine: step 1/1. Catalyzes the decarboxylation of S-adenosylmethionine to S-adenosylmethioninamine (dcAdoMet), the propylamine donor required for the synthesis of the polyamines spermine and spermidine from the diamine putrescine. In Geobacillus kaustophilus (strain HTA426), this protein is S-adenosylmethionine decarboxylase proenzyme.